Reading from the N-terminus, the 355-residue chain is Probable nitronate monooxygenase (355 aa).

Residues Asn71, Gln175, Gly180, Gly218, and 237-240 (QMGT) contribute to the FMN site.

Belongs to the nitronate monooxygenase family. NMO class I subfamily. It depends on FMN as a cofactor.

It catalyses the reaction 3 propionate 3-nitronate + 3 O2 + H2O = 3 3-oxopropanoate + 2 nitrate + nitrite + H2O2 + 3 H(+). In terms of biological role, nitronate monooxygenase that uses molecular oxygen to catalyze the oxidative denitrification of alkyl nitronates. Acts on propionate 3-nitronate (P3N), the presumed physiological substrate. Probably functions in the detoxification of P3N, a metabolic poison produced by plants and fungi as a defense mechanism. The protein is Probable nitronate monooxygenase of Staphylococcus aureus (strain MSSA476).